The following is a 256-amino-acid chain: DNA repair protein RecO (256 aa).

Belongs to the RecO family.

Involved in DNA repair and RecF pathway recombination. In Rhizobium etli (strain ATCC 51251 / DSM 11541 / JCM 21823 / NBRC 15573 / CFN 42), this protein is DNA repair protein RecO.